Here is a 1300-residue protein sequence, read N- to C-terminus: DNA-directed RNA polymerase subunit beta (1300 aa).

It belongs to the RNA polymerase beta chain family. In terms of assembly, the RNAP catalytic core consists of 2 alpha, 1 beta, 1 beta' and 1 omega subunit. When a sigma factor is associated with the core the holoenzyme is formed, which can initiate transcription.

The catalysed reaction is RNA(n) + a ribonucleoside 5'-triphosphate = RNA(n+1) + diphosphate. Functionally, DNA-dependent RNA polymerase catalyzes the transcription of DNA into RNA using the four ribonucleoside triphosphates as substrates. This Chlorobium chlorochromatii (strain CaD3) protein is DNA-directed RNA polymerase subunit beta.